A 1202-amino-acid chain; its full sequence is DNA-directed RNA polymerase subunit beta (1202 aa).

This sequence belongs to the RNA polymerase beta chain family. In terms of assembly, the RNAP catalytic core consists of 2 alpha, 1 beta, 1 beta' and 1 omega subunit. When a sigma factor is associated with the core the holoenzyme is formed, which can initiate transcription.

The enzyme catalyses RNA(n) + a ribonucleoside 5'-triphosphate = RNA(n+1) + diphosphate. In terms of biological role, DNA-dependent RNA polymerase catalyzes the transcription of DNA into RNA using the four ribonucleoside triphosphates as substrates. This Mycoplasmopsis synoviae (strain 53) (Mycoplasma synoviae) protein is DNA-directed RNA polymerase subunit beta.